A 110-amino-acid polypeptide reads, in one-letter code: Iron-sulfur cluster assembly protein CyaY (110 aa).

It belongs to the frataxin family.

Involved in iron-sulfur (Fe-S) cluster assembly. May act as a regulator of Fe-S biogenesis. This Pseudomonas fluorescens (strain SBW25) protein is Iron-sulfur cluster assembly protein CyaY.